The following is a 488-amino-acid chain: Facilitated trehalose transporter Tret1-2 homolog (488 aa).

Residues methionine 1–glutamine 28 are Cytoplasmic-facing. The helical transmembrane segment at valine 29–threonine 49 threads the bilayer. Residues serine 50–serine 72 are Extracellular-facing. Residues tryptophan 73–isoleucine 93 traverse the membrane as a helical segment. At glutamate 94–threonine 105 the chain is on the cytoplasmic side. The chain crosses the membrane as a helical span at residues alanine 106–leucine 126. Residues cysteine 127–arginine 129 are Extracellular-facing. Residues phenylalanine 130 to threonine 150 form a helical membrane-spanning segment. Topologically, residues leucine 151–glycine 160 are cytoplasmic. A helical membrane pass occupies residues leucine 161–methionine 181. An N-linked (GlcNAc...) asparagine glycan is attached at asparagine 182. Over asparagine 182–serine 184 the chain is Extracellular. Residues methionine 185–proline 205 traverse the membrane as a helical segment. The Cytoplasmic portion of the chain corresponds to glutamate 206 to proline 268. Residues leucine 269–phenylalanine 289 traverse the membrane as a helical segment. The Extracellular segment spans residues tyrosine 290–asparagine 305. A helical transmembrane segment spans residues leucine 306–isoleucine 326. Residues aspartate 327 to lysine 332 lie on the Cytoplasmic side of the membrane. Residues isoleucine 333–phenylalanine 353 form a helical membrane-spanning segment. Topologically, residues tyrosine 354 to cysteine 372 are extracellular. The helical transmembrane segment at phenylalanine 373–glycine 393 threads the bilayer. The Cytoplasmic portion of the chain corresponds to glutamate 394–glycine 402. Residues proline 403–phenylalanine 423 form a helical membrane-spanning segment. The Extracellular portion of the chain corresponds to glutamine 424 to histidine 433. The helical transmembrane segment at glycine 434 to valine 454 threads the bilayer. Over proline 455–methionine 488 the chain is Cytoplasmic.

The protein belongs to the major facilitator superfamily. Sugar transporter (TC 2.A.1.1) family. Trehalose transporter subfamily.

It localises to the cell membrane. In terms of biological role, fails to transport trehalose. The protein is Facilitated trehalose transporter Tret1-2 homolog of Drosophila simulans (Fruit fly).